A 112-amino-acid polypeptide reads, in one-letter code: Cytochrome c (112 aa).

Heme c-binding residues include Cys23, Cys26, and His27. N6,N6,N6-trimethyllysine is present on Lys81. Residue Met89 coordinates heme c. Lys95 bears the N6,N6,N6-trimethyllysine mark.

The protein belongs to the cytochrome c family. Post-translationally, binds 1 heme c group covalently per subunit.

Its subcellular location is the mitochondrion intermembrane space. Electron carrier protein. The oxidized form of the cytochrome c heme group can accept an electron from the heme group of the cytochrome c1 subunit of cytochrome reductase. Cytochrome c then transfers this electron to the cytochrome oxidase complex, the final protein carrier in the mitochondrial electron-transport chain. In Arabidopsis thaliana (Mouse-ear cress), this protein is Cytochrome c (CC-1).